A 414-amino-acid polypeptide reads, in one-letter code: Tryptophan synthase beta chain (414 aa).

Position 109 is an N6-(pyridoxal phosphate)lysine (Lys-109).

The protein belongs to the TrpB family. In terms of assembly, tetramer of two alpha and two beta chains. Pyridoxal 5'-phosphate is required as a cofactor.

It carries out the reaction (1S,2R)-1-C-(indol-3-yl)glycerol 3-phosphate + L-serine = D-glyceraldehyde 3-phosphate + L-tryptophan + H2O. The protein operates within amino-acid biosynthesis; L-tryptophan biosynthesis; L-tryptophan from chorismate: step 5/5. Functionally, the beta subunit is responsible for the synthesis of L-tryptophan from indole and L-serine. The sequence is that of Tryptophan synthase beta chain from Prochlorococcus marinus (strain AS9601).